We begin with the raw amino-acid sequence, 286 residues long: MQKLTLPAPAKLNLWLHIIGRRADGYHELETVFQFLDHGDELSFALRDDGVIRLHTEIEAVPHDSNLIVRAARMLQAQSGTTLGADIWLTKVLPMGGGIGGGSSDAATTLLALAHLWQLDWDEDRLAALGLSLGADVPVFVRGHAAFAQGVGEQLTPVDPIEPWYVVLVPQVSVSTVEIFSHPQLTRDSLPLKMRPVPEGNSRNDCQPVVEQNYPQVRNALNSLGKFTEARLTGTGSCVFGAFPSKAEADKVLALLSATQTGFVAKGSNISMLHRKLQSLVKKSSA.

Lys11 is an active-site residue. 94-104 (PMGGGIGGGSS) serves as a coordination point for ATP. The active site involves Asp136.

This sequence belongs to the GHMP kinase family. IspE subfamily.

The enzyme catalyses 4-CDP-2-C-methyl-D-erythritol + ATP = 4-CDP-2-C-methyl-D-erythritol 2-phosphate + ADP + H(+). It participates in isoprenoid biosynthesis; isopentenyl diphosphate biosynthesis via DXP pathway; isopentenyl diphosphate from 1-deoxy-D-xylulose 5-phosphate: step 3/6. Functionally, catalyzes the phosphorylation of the position 2 hydroxy group of 4-diphosphocytidyl-2C-methyl-D-erythritol. This is 4-diphosphocytidyl-2-C-methyl-D-erythritol kinase from Pseudomonas putida (strain ATCC 700007 / DSM 6899 / JCM 31910 / BCRC 17059 / LMG 24140 / F1).